The chain runs to 176 residues: Large ribosomal subunit protein eL20 (176 aa).

Belongs to the eukaryotic ribosomal protein eL20 family. As to quaternary structure, component of the large ribosomal subunit.

The protein localises to the cytoplasm. Component of the large ribosomal subunit. The ribosome is a large ribonucleoprotein complex responsible for the synthesis of proteins in the cell. The chain is Large ribosomal subunit protein eL20 (rpl18a) from Ictalurus punctatus (Channel catfish).